The sequence spans 499 residues: Glutamyl-tRNA(Gln) amidotransferase subunit A, mitochondrial (499 aa).

Catalysis depends on charge relay system residues K61 and S139. S163 serves as the catalytic Acyl-ester intermediate.

This sequence belongs to the amidase family. GatA subfamily. As to quaternary structure, subunit of the heterotrimeric GatCAB amidotransferase (AdT) complex, composed of A, B and C subunits.

It is found in the mitochondrion. It catalyses the reaction L-glutamyl-tRNA(Gln) + L-glutamine + ATP + H2O = L-glutaminyl-tRNA(Gln) + L-glutamate + ADP + phosphate + H(+). Its function is as follows. Allows the formation of correctly charged Gln-tRNA(Gln) through the transamidation of misacylated Glu-tRNA(Gln) in the mitochondria. The reaction takes place in the presence of glutamine and ATP through an activated gamma-phospho-Glu-tRNA(Gln). In Coccidioides posadasii (strain C735) (Valley fever fungus), this protein is Glutamyl-tRNA(Gln) amidotransferase subunit A, mitochondrial.